Consider the following 784-residue polypeptide: E3 UFM1-protein ligase 1 homolog (784 aa).

The segment at 405–480 is disordered; sequence SVSTQELEDD…RGGGAGNKKA (76 aa). The segment covering 444–454 has biased composition (basic residues); the sequence is KSTKKHQRGKA.

This sequence belongs to the UFL1 family.

E3 UFM1-protein ligase that mediates ufmylation of target proteins. The sequence is that of E3 UFM1-protein ligase 1 homolog from Drosophila yakuba (Fruit fly).